The chain runs to 120 residues: NAD(P)H-quinone oxidoreductase subunit 3 (120 aa).

Transmembrane regions (helical) follow at residues 7-27 (YEYF…SLTA), 64-84 (MFAL…PWAV), and 89-109 (LGLL…VALV).

Belongs to the complex I subunit 3 family. NDH-1 can be composed of about 15 different subunits; different subcomplexes with different compositions have been identified which probably have different functions.

The protein resides in the cellular thylakoid membrane. It carries out the reaction a plastoquinone + NADH + (n+1) H(+)(in) = a plastoquinol + NAD(+) + n H(+)(out). It catalyses the reaction a plastoquinone + NADPH + (n+1) H(+)(in) = a plastoquinol + NADP(+) + n H(+)(out). In terms of biological role, NDH-1 shuttles electrons from an unknown electron donor, via FMN and iron-sulfur (Fe-S) centers, to quinones in the respiratory and/or the photosynthetic chain. The immediate electron acceptor for the enzyme in this species is believed to be plastoquinone. Couples the redox reaction to proton translocation, and thus conserves the redox energy in a proton gradient. Cyanobacterial NDH-1 also plays a role in inorganic carbon-concentration. In Microcystis aeruginosa (strain NIES-843 / IAM M-2473), this protein is NAD(P)H-quinone oxidoreductase subunit 3.